The chain runs to 237 residues: Ribonuclease PH (237 aa).

Phosphate-binding positions include Arg86 and 124–126; that span reads GTR.

It belongs to the RNase PH family. Homohexameric ring arranged as a trimer of dimers.

The enzyme catalyses tRNA(n+1) + phosphate = tRNA(n) + a ribonucleoside 5'-diphosphate. Functionally, phosphorolytic 3'-5' exoribonuclease that plays an important role in tRNA 3'-end maturation. Removes nucleotide residues following the 3'-CCA terminus of tRNAs; can also add nucleotides to the ends of RNA molecules by using nucleoside diphosphates as substrates, but this may not be physiologically important. Probably plays a role in initiation of 16S rRNA degradation (leading to ribosome degradation) during starvation. The chain is Ribonuclease PH from Methylorubrum populi (strain ATCC BAA-705 / NCIMB 13946 / BJ001) (Methylobacterium populi).